Consider the following 142-residue polypeptide: Secreted RxLR effector protein 161 (142 aa).

A signal peptide spans 1–27; it reads MKNVPYLSAVGAIMYLMVVTRPDLAAA. Positions 48 to 51 match the RxLR motif; it reads RVLR.

It belongs to the RxLR effector family.

Its subcellular location is the secreted. The protein resides in the host chloroplast envelope. It localises to the host nucleus. Functionally, secreted effector that completely suppresses the host cell death induced by cell death-inducing proteins. The chain is Secreted RxLR effector protein 161 from Plasmopara viticola (Downy mildew of grapevine).